Consider the following 385-residue polypeptide: L-arabinitol 4-dehydrogenase (385 aa).

The Zn(2+) site is built by Cys-54, His-79, Glu-80, Cys-109, Cys-112, Cys-115, Cys-123, and Glu-164. Residues 191–192, Asp-212, Arg-217, Ile-292, and 316–318 each bind NAD(+); these read PI and QYR.

It belongs to the zinc-containing alcohol dehydrogenase family. In terms of assembly, homotetramer. Requires Zn(2+) as cofactor.

It carries out the reaction L-arabinitol + NAD(+) = L-xylulose + NADH + H(+). The protein operates within carbohydrate degradation; L-arabinose degradation via L-arabinitol; D-xylulose 5-phosphate from L-arabinose (fungal route): step 2/5. In terms of biological role, catalyzes the NAD-dependent oxidation of L-arabinitol to L-xylulose in the fungal L-arabinose catabolic pathway. L-arabinose catabolism is important for using plant material as a carbon source. NADP cannot act as a cosubstrate. This Penicillium rubens (strain ATCC 28089 / DSM 1075 / NRRL 1951 / Wisconsin 54-1255) (Penicillium chrysogenum) protein is L-arabinitol 4-dehydrogenase (lad1).